The following is a 232-amino-acid chain: Ion-translocating oxidoreductase complex subunit E (232 aa).

6 consecutive transmembrane segments (helical) span residues 18-38 (GLVQLLGLCPLLAVTATLTNA), 39-59 (IGLGLATLVVLVGSNVLVSLV), 69-89 (IPVFVMIIAALVTCVQLLINA), 93-113 (GLYLSLGIFLPLIVTNCVIIG), 127-147 (AAFDGLMMGLGFTLVLMLLGA), and 182-202 (NFLLAMLPPGAFIAMGFLIAI).

Belongs to the NqrDE/RnfAE family. As to quaternary structure, the complex is composed of six subunits: RnfA, RnfB, RnfC, RnfD, RnfE and RnfG.

The protein localises to the cell inner membrane. Its function is as follows. Part of a membrane-bound complex that couples electron transfer with translocation of ions across the membrane. The polypeptide is Ion-translocating oxidoreductase complex subunit E (Shewanella loihica (strain ATCC BAA-1088 / PV-4)).